A 336-amino-acid chain; its full sequence is Glucokinase (336 aa).

12-17 (ADIGGT) provides a ligand contact to ATP.

It belongs to the bacterial glucokinase family.

It localises to the cytoplasm. The enzyme catalyses D-glucose + ATP = D-glucose 6-phosphate + ADP + H(+). This Helicobacter acinonychis (strain Sheeba) protein is Glucokinase.